The following is a 488-amino-acid chain: Serine hydroxymethyltransferase, mitochondrial (488 aa).

The transit peptide at 1–20 (MAVLRQFVKNSYSSIPKRFY) directs the protein to the mitochondrion. An N6-(pyridoxal phosphate)lysine modification is found at Lys265.

This sequence belongs to the SHMT family. Homotetramer. Requires pyridoxal 5'-phosphate as cofactor.

The protein resides in the mitochondrion. The catalysed reaction is (6R)-5,10-methylene-5,6,7,8-tetrahydrofolate + glycine + H2O = (6S)-5,6,7,8-tetrahydrofolate + L-serine. The protein operates within one-carbon metabolism; tetrahydrofolate interconversion. Functionally, interconversion of serine and glycine. In Schizosaccharomyces pombe (strain 972 / ATCC 24843) (Fission yeast), this protein is Serine hydroxymethyltransferase, mitochondrial (shm2).